The sequence spans 212 residues: Acyl-homoserine-lactone synthase (212 aa).

Belongs to the autoinducer synthase family.

The enzyme catalyses a fatty acyl-[ACP] + S-adenosyl-L-methionine = an N-acyl-L-homoserine lactone + S-methyl-5'-thioadenosine + holo-[ACP] + H(+). Functionally, required for the synthesis of OHHL (N-(3-oxohexanoyl)-L-homoserine lactone), an autoinducer molecule which binds to ExpR and thus acts in virulence (soft rot disease) through the activation of genes for plant tissue macerating enzymes. This Dickeya dadantii (strain 3937) (Erwinia chrysanthemi (strain 3937)) protein is Acyl-homoserine-lactone synthase (expI).